A 208-amino-acid polypeptide reads, in one-letter code: 3-isopropylmalate dehydratase small subunit (208 aa).

It belongs to the LeuD family. LeuD type 1 subfamily. In terms of assembly, heterodimer of LeuC and LeuD.

It carries out the reaction (2R,3S)-3-isopropylmalate = (2S)-2-isopropylmalate. It participates in amino-acid biosynthesis; L-leucine biosynthesis; L-leucine from 3-methyl-2-oxobutanoate: step 2/4. Functionally, catalyzes the isomerization between 2-isopropylmalate and 3-isopropylmalate, via the formation of 2-isopropylmaleate. This chain is 3-isopropylmalate dehydratase small subunit, found in Gluconobacter oxydans (strain 621H) (Gluconobacter suboxydans).